Reading from the N-terminus, the 259-residue chain is NAP1-related protein 1 (259 aa).

Residues 1-15 show a composition bias toward basic and acidic residues; the sequence is MAAAEQKGKKPRTDG. The interval 1-20 is disordered; sequence MAAAEQKGKKPRTDGAEAEP. The stretch at 21–62 forms a coiled coil; that stretch reads VDAALLQSIEKLQEIQDEIEKVNEEACDKVLELEQKYNEVRR. The disordered stretch occupies residues 228 to 259; the sequence is ELLDDDDEVSDDDDEEEDDEDQGEGEEDGEEN.

It belongs to the nucleosome assembly protein (NAP) family.

It is found in the nucleus. The protein localises to the cytoplasm. Its function is as follows. Acts as a histone H2A/H2B chaperone in nucleosome assembly. This is NAP1-related protein 1 from Oryza sativa subsp. indica (Rice).